A 252-amino-acid polypeptide reads, in one-letter code: Probable endonuclease 4 (252 aa).

Zn(2+) contacts are provided by H56, H96, E129, D162, H165, H191, D204, H206, and E233.

It belongs to the AP endonuclease 2 family. It depends on Zn(2+) as a cofactor.

The catalysed reaction is Endonucleolytic cleavage to 5'-phosphooligonucleotide end-products.. In terms of biological role, endonuclease IV plays a role in DNA repair. It cleaves phosphodiester bonds at apurinic or apyrimidinic (AP) sites, generating a 3'-hydroxyl group and a 5'-terminal sugar phosphate. This Mycobacterium marinum (strain ATCC BAA-535 / M) protein is Probable endonuclease 4.